The following is a 193-amino-acid chain: CASP-like protein 2U1 (193 aa).

Topologically, residues Met1 to Lys18 are cytoplasmic. The chain crosses the membrane as a helical span at residues Val19–Val39. Residues Ala40–Lys61 are Extracellular-facing. The chain crosses the membrane as a helical span at residues Ala62–Ala82. The Cytoplasmic segment spans residues Ala83–Asp113. A helical transmembrane segment spans residues Gln114–Ala134. The Extracellular segment spans residues Lys135–Gln156. Residues Ala157–Leu177 traverse the membrane as a helical segment. Over Ser178 to Ser193 the chain is Cytoplasmic.

It belongs to the Casparian strip membrane proteins (CASP) family. As to quaternary structure, homodimer and heterodimers.

The protein localises to the cell membrane. The chain is CASP-like protein 2U1 from Sorghum bicolor (Sorghum).